Here is a 229-residue protein sequence, read N- to C-terminus: Adenylate kinase (229 aa).

Positions 1–9 are excised as a propeptide; it reads MLSTLAKRF. Position 25–30 (25–30) interacts with ATP; the sequence is GVGKGT. The interval 45-74 is NMP; the sequence is STGDALRAEIRGQTPLGKRVKGIIESGGLV. AMP contacts are provided by residues Thr-46, Arg-51, 72-74, 100-103, and Gln-107; these read GLV and GIPR. The LID stretch occupies residues 141–178; the sequence is GRLFHPGSGRVYHKVTNPPKKPMTDDITGEPLIIRKDD. Arg-142 is a binding site for ATP. The AMP site is built by Arg-175 and Arg-186. Gly-214 lines the ATP pocket.

Belongs to the adenylate kinase family.

Its subcellular location is the hydrogenosome. The catalysed reaction is AMP + ATP = 2 ADP. Catalyzes the reversible transfer of the terminal phosphate group between ATP and AMP. Plays an important role in cellular energy homeostasis and in adenine nucleotide metabolism. This chain is Adenylate kinase, found in Trichomonas vaginalis.